We begin with the raw amino-acid sequence, 201 residues long: Transgelin (201 aa).

The residue at position 2 (Ala2) is an N-acetylalanine. Positions 24–137 (EELEERLVEW…RTLMALGSLA (114 aa)) constitute a Calponin-homology (CH) domain. Ser166 carries the phosphoserine modification. Position 172 is an N6-acetyllysine (Lys172). The Calponin-like repeat unit spans residues 175–200 (IGLQMGSNRGASQAGMTGYGRPRQII). The residue at position 181 (Ser181) is a Phosphoserine. At Arg183 the chain carries Omega-N-methylarginine.

The protein belongs to the calponin family.

The protein localises to the cytoplasm. Its function is as follows. Actin cross-linking/gelling protein. The polypeptide is Transgelin (Tagln) (Mus musculus (Mouse)).